A 262-amino-acid chain; its full sequence is MQPTSVGSSGGGDDGGGRGGGGGLSRSGLSRIRSAPATWLEALLEEDEEESLKPNLGLTDLLTGNSNDLPTSRGSFEFPIPVEQGLYQQGGFHRQNSTPADFLSGSDGFIQSFGIQANYDYLSGNIDVSPGSKRSREMEALFSSPEFTSQMKGEQSSGQVPTGVSSMSDMNMENLMEDSVAFRVRAKRGCATHPRSIAERVRRTRISDRIRKLQELVPNMDKQTNTADMLEEAVEYVKVLQRQIQELTEEQKRCTCIPKEEQ.

The tract at residues 1–29 (MQPTSVGSSGGGDDGGGRGGGGGLSRSGL) is disordered. Residues 8-25 (SSGGGDDGGGRGGGGGLS) are compositionally biased toward gly residues. The bHLH domain occupies 190–240 (CATHPRSIAERVRRTRISDRIRKLQELVPNMDKQTNTADMLEEAVEYVKVL).

In terms of assembly, homodimer. In terms of tissue distribution, expressed in flowers.

It is found in the nucleus. This chain is Transcription factor bHLH81 (BHLH81), found in Arabidopsis thaliana (Mouse-ear cress).